A 469-amino-acid polypeptide reads, in one-letter code: Gamma-aminobutyric acid permease (469 aa).

At 1 to 17 (MNQSQSGLKKELKTRHM) the chain is on the cytoplasmic side. The chain crosses the membrane as a helical span at residues 18–38 (TMISIAGVIGAGLFVGSGSVI). His-39 is a topological domain (extracellular). Residues 40-60 (STGPGAVVSYALAGLLVIFIM) traverse the membrane as a helical segment. Residues 61-94 (RMLGEMSAVNPTSGSFSQYAHDAIGPWAGFTIGW) lie on the Cytoplasmic side of the membrane. Residues 95–115 (LYWFFWVIVIAIEAIAGAGII) form a helical membrane-spanning segment. Gln-116 is a topological domain (extracellular). The helical transmembrane segment at 117 to 137 (YWFHDIPLWLTSLILTIVLTL) threads the bilayer. Residues 138 to 157 (TNVYSVKSFGEFEYWFSLIK) are Cytoplasmic-facing. Residues 158 to 178 (VVTIIAFLIVGFAFIFGFAPG) form a helical membrane-spanning segment. The Extracellular segment spans residues 179 to 200 (SEPVGFSNLTGKGGFFPEGISS). A helical transmembrane segment spans residues 201–221 (VLLGIVVVIFSFMGTEIVAIA). The Cytoplasmic portion of the chain corresponds to 222–242 (AGETSNPIESVTKATRSVVWR). A helical membrane pass occupies residues 243 to 263 (IIVFYVGSIAIVVALLPWNSA). Topologically, residues 264–269 (NILESP) are extracellular. Residues 270-290 (FVAVLEHIGVPAAAQIMNFIV) form a helical membrane-spanning segment. Residues 291 to 328 (LTAVLSCLNSGLYTTSRMLYSLAERNEAPRRFMKLSKK) are Cytoplasmic-facing. A helical transmembrane segment spans residues 329-349 (GVPVQAIVAGTFFSYIAVVMN). Over 350 to 355 (YFSPDT) the chain is Extracellular. The chain crosses the membrane as a helical span at residues 356 to 376 (VFLFLVNSSGAIALLVYLVIA). The Cytoplasmic portion of the chain corresponds to 377 to 401 (VSQLKMRKKLEKTNPEALKIKMWLF). Residues 402–422 (PFLTYLTIIAICGILVSMAFI) traverse the membrane as a helical segment. Residues 423–425 (DSM) are Extracellular-facing. The helical transmembrane segment at 426–446 (RDELLLTGVITGIVLISYLVF) threads the bilayer. The Cytoplasmic portion of the chain corresponds to 447-469 (RKRKVSEKAAANPVTQQQPDILP).

Belongs to the amino acid-polyamine-organocation (APC) superfamily. Amino acid transporter (AAT) (TC 2.A.3.1) family.

The protein resides in the cell membrane. It carries out the reaction 4-aminobutanoate(in) + H(+)(in) = 4-aminobutanoate(out) + H(+)(out). It catalyses the reaction beta-alanine(in) + H(+)(in) = beta-alanine(out) + H(+)(out). Its pathway is amino-acid degradation; 4-aminobutanoate degradation. Its function is as follows. Transporter for gamma-aminobutyrate (GABA). Can also transport beta-alanine. Can translocate several open-chain GABA analogs (3-aminobutyrate, 3-aminopropanoate, cis-4-aminobutenoate) across the membrane via counterflow against GABA, but cannot transport muscimol. Also functions as a low-affinity proline importer. This chain is Gamma-aminobutyric acid permease, found in Bacillus subtilis (strain 168).